A 687-amino-acid polypeptide reads, in one-letter code: Glycine--tRNA ligase beta subunit (687 aa).

Belongs to the class-II aminoacyl-tRNA synthetase family. Tetramer of two alpha and two beta subunits.

The protein localises to the cytoplasm. The catalysed reaction is tRNA(Gly) + glycine + ATP = glycyl-tRNA(Gly) + AMP + diphosphate. The chain is Glycine--tRNA ligase beta subunit from Neisseria meningitidis serogroup A / serotype 4A (strain DSM 15465 / Z2491).